The chain runs to 98 residues: Integration host factor subunit alpha (98 aa).

The interval 49-72 (FGNFDLRDKNQRPGRNPKTGEDIP) is disordered.

The protein belongs to the bacterial histone-like protein family. As to quaternary structure, heterodimer of an alpha and a beta chain.

In terms of biological role, this protein is one of the two subunits of integration host factor, a specific DNA-binding protein that functions in genetic recombination as well as in transcriptional and translational control. The sequence is that of Integration host factor subunit alpha from Shewanella loihica (strain ATCC BAA-1088 / PV-4).